Reading from the N-terminus, the 510-residue chain is Histidine ammonia-lyase (510 aa).

The 5-imidazolinone (Ala-Gly) cross-link spans 143 to 145; that stretch reads ASG. S144 is modified (2,3-didehydroalanine (Ser)).

Belongs to the PAL/histidase family. Post-translationally, contains an active site 4-methylidene-imidazol-5-one (MIO), which is formed autocatalytically by cyclization and dehydration of residues Ala-Ser-Gly.

It localises to the cytoplasm. It carries out the reaction L-histidine = trans-urocanate + NH4(+). Its pathway is amino-acid degradation; L-histidine degradation into L-glutamate; N-formimidoyl-L-glutamate from L-histidine: step 1/3. This Aliivibrio fischeri (strain MJ11) (Vibrio fischeri) protein is Histidine ammonia-lyase.